The following is a 145-amino-acid chain: Thioredoxin C-3 (145 aa).

The heme site is built by C25, C28, and H29. Residues 29–140 (HQALLPLEPI…LQQWLDQQLQ (112 aa)) form the Thioredoxin domain. C65 and C68 are joined by a disulfide.

This sequence belongs to the thioredoxin family.

Its function is as follows. Participates in various redox reactions through the reversible oxidation of its active center dithiol to a disulfide and catalyzes dithiol-disulfide exchange reactions. This is Thioredoxin C-3 from Corynebacterium nephridii.